An 830-amino-acid chain; its full sequence is Eisosome protein 1 (830 aa).

Disordered stretches follow at residues 1 to 29 (MSLV…SAGK), 128 to 156 (RSRT…KTPK), and 650 to 830 (GEFL…KEVF). Composition is skewed to low complexity over residues 128–148 (RSRT…SSSS) and 741–761 (TKTT…KPVT). Residues 810–830 (EGGKEEPTSKDNRKSLFKEVF) show a composition bias toward basic and acidic residues.

Belongs to the EIS1 family.

The protein localises to the cytoplasmic granule. The protein resides in the cell membrane. Its function is as follows. Required for normal formation of eisosomes, large cytoplasmic protein assemblies that localize to specialized domains on plasma membrane and mark the site of endocytosis. This is Eisosome protein 1 (EIS1) from Kluyveromyces lactis (strain ATCC 8585 / CBS 2359 / DSM 70799 / NBRC 1267 / NRRL Y-1140 / WM37) (Yeast).